The primary structure comprises 575 residues: DNA polymerase lambda (575 aa).

Residues 36–132 (EAEEWLSSLR…RLVDVAGFSI (97 aa)) form the BRCT domain. Positions 160–205 (ALLQTALPPPPSPTRPVSPPQKTKEAPNTQAQPISDDEASDGEETQ) are disordered. Residues 166 to 178 (LPPPPSPTRPVSP) are compositionally biased toward pro residues. Over residues 194–203 (SDDEASDGEE) the composition is skewed to acidic residues. The segment at 265 to 279 (KAYSVQGDKWRALGY) is DNA-binding. Lys-312 functions as the Schiff-base intermediate with DNA in the catalytic mechanism. Residues 345–348 (GTKT) form a DNA-binding region. DCTP is bound by residues Arg-386, 417-420 (SYRR), and 426-429 (GDVD). The segment at 420–429 (RGKATCGDVD) is involved in primer binding. Mn(2+) is bound by residues Asp-427, Asp-429, and Asp-490. The tract at residues 466–505 (ENGQQQKYLGVCRLPGPGWRHRRLDIIVVPYSEFACALLY) is DNA-binding. Asn-513 provides a ligand contact to dCTP.

Belongs to the DNA polymerase type-X family. Interacts with PCNA. Interacts with PAXX; promoting POLL recruitment to double-strand breaks (DSBs) and stimulation of the end-filling activity of POLL. Interacts with XRCC4; promoting POLL recruitment to double-strand breaks (DSBs) and stimulation of the end-filling activity of POLL. Interacts with NHEJ1/XLF; promoting POLL recruitment to double-strand breaks (DSBs) and stimulation of the end-filling activity of POLL. The cofactor is Mn(2+).

The protein resides in the nucleus. It carries out the reaction DNA(n) + a 2'-deoxyribonucleoside 5'-triphosphate = DNA(n+1) + diphosphate. Its function is as follows. DNA polymerase that functions in several pathways of DNA repair. Involved in base excision repair (BER) responsible for repair of lesions that give rise to abasic (AP) sites in DNA. Also contributes to DNA double-strand break repair by non-homologous end joining and homologous recombination. Has both template-dependent and template-independent (terminal transferase) DNA polymerase activities. Also has a 5'-deoxyribose-5-phosphate lyase (dRP lyase) activity. The chain is DNA polymerase lambda from Macaca fascicularis (Crab-eating macaque).